A 493-amino-acid chain; its full sequence is Anthranilate synthase component 1 (493 aa).

L-tryptophan is bound by residues serine 48 and 273-275 (PYM). 308–309 (GT) contacts chorismate. Glutamate 335 provides a ligand contact to Mg(2+). Residues tyrosine 423, arginine 443, 457–459 (GGG), and glycine 459 contribute to the chorismate site. Glutamate 472 contacts Mg(2+).

This sequence belongs to the anthranilate synthase component I family. Heterotetramer consisting of two non-identical subunits: a beta subunit (TrpG) and a large alpha subunit (TrpE). Requires Mg(2+) as cofactor.

It carries out the reaction chorismate + L-glutamine = anthranilate + pyruvate + L-glutamate + H(+). It participates in amino-acid biosynthesis; L-tryptophan biosynthesis; L-tryptophan from chorismate: step 1/5. Feedback inhibited by tryptophan. Part of a heterotetrameric complex that catalyzes the two-step biosynthesis of anthranilate, an intermediate in the biosynthesis of L-tryptophan. In the first step, the glutamine-binding beta subunit (TrpG) of anthranilate synthase (AS) provides the glutamine amidotransferase activity which generates ammonia as a substrate that, along with chorismate, is used in the second step, catalyzed by the large alpha subunit of AS (TrpE) to produce anthranilate. In the absence of TrpG, TrpE can synthesize anthranilate directly from chorismate and high concentrations of ammonia. This Pseudomonas putida (Arthrobacter siderocapsulatus) protein is Anthranilate synthase component 1 (trpE).